The primary structure comprises 371 residues: Mitogen-activated protein kinase homolog NTF6 (371 aa).

A Protein kinase domain is found at 38–324 (IPPIQPVGRG…VEDALNHPFL (287 aa)). Residues 44 to 52 (VGRGAYGMV) and Lys-67 each bind ATP. Asp-164 functions as the Proton acceptor in the catalytic mechanism. Thr-196 carries the phosphothreonine modification. Positions 196 to 198 (TEY) match the TXY motif. Tyr-198 is subject to Phosphotyrosine.

This sequence belongs to the protein kinase superfamily. CMGC Ser/Thr protein kinase family. MAP kinase subfamily. Mg(2+) serves as cofactor. Post-translationally, dually phosphorylated on Thr-196 and Tyr-198, which activates the enzyme. Very low autophosphorylation, although dramatically increased when Mn(2+) is added to the reaction instead of Mg(2+).

It catalyses the reaction L-seryl-[protein] + ATP = O-phospho-L-seryl-[protein] + ADP + H(+). It carries out the reaction L-threonyl-[protein] + ATP = O-phospho-L-threonyl-[protein] + ADP + H(+). With respect to regulation, activated by tyrosine and threonine phosphorylation. This Nicotiana tabacum (Common tobacco) protein is Mitogen-activated protein kinase homolog NTF6 (NTF6).